The following is a 1472-amino-acid chain: Gag-Pol polyprotein (1472 aa).

Residue Gly-2 is the site of N-myristoyl glycine; by host attachment. Positions 16 to 22 (FEKIRLR) match the Nuclear export signal motif. The short motif at 26–32 (KKKYQIK) is the Nuclear localization signal element. 2 disordered regions span residues 115-135 (EKAA…SRNY) and 215-234 (DRTH…RDPT). Tyr-135 bears the Phosphotyrosine; by host mark. 2 consecutive CCHC-type zinc fingers follow at residues 390–407 (LKCF…ECKA) and 411–428 (IKCF…DCKN). Residues 454–500 (HSWSGTNSPPNGNSLRSSKEAPPAVCREGTAPERGERTDKETEGERS) are disordered. Residues 456–469 (WSGTNSPPNGNSLR) are compositionally biased toward polar residues. The segment covering 483–499 (TAPERGERTDKETEGER) has biased composition (basic and acidic residues). Residues 524–597 (VQALLDTGAD…TPINIIGRNI (74 aa)) form the Peptidase A2 domain. The active-site For protease activity; shared with dimeric partner is Asp-529. The Reverse transcriptase domain maps to 653-843 (EGKLSRIGGE…PPWEWMGYKL (191 aa)). Asp-719, Asp-794, and Asp-795 together coordinate Mg(2+). Residues 836-844 (WEWMGYKLH) are RT 'primer grip'. The short motif at 1007-1023 (WDMWWQDYWQVSWIPEW) is the Tryptophan repeat motif element. In terms of domain architecture, RNase H type-1 spans 1043 to 1166 (IKGEDVYYVD…IDKLVSKGIR (124 aa)). Mg(2+) is bound by residues Asp-1052, Glu-1087, Asp-1107, and Asp-1158. An Integrase-type zinc finger spans residues 1172-1213 (DRIEEAQDDHAKYHNNWRSMVQEFGLPNIVAKEIVAACPKCQ). 4 residues coordinate Zn(2+): His-1181, His-1185, Cys-1209, and Cys-1212. An Integrase catalytic domain is found at 1223–1373 (VDASIETWQM…SSAERLVNML (151 aa)). Asp-1233 and Asp-1285 together coordinate Mg(2+). The segment at residues 1392-1439 (FKVYYREGRDPVWKGPARLIWKGEGAVVIKEGEDIKVVPRRKAKIIKD) is a DNA-binding region (integrase-type). The segment at 1440–1472 (YGERKTMDSEGSMEGVREANKQMEGDSDLQDQE) is disordered. The span at 1454-1463 (GVREANKQME) shows a compositional bias: basic and acidic residues.

As to quaternary structure, homotrimer. Interacts with gp41 (via C-terminus). In terms of assembly, homodimer. The active site consists of two apposed aspartic acid residues. Heterodimer of p66 RT and p51 RT (RT p66/p51). Heterodimerization of RT is essential for DNA polymerase activity. Despite the sequence identities, p66 RT and p51 RT have distinct folding. As to quaternary structure, homotetramer; may further associate as a homohexadecamer. The cofactor is Mg(2+). Specific enzymatic cleavages by the viral protease yield mature proteins. The protease is released by autocatalytic cleavage. The polyprotein is cleaved during and after budding, this process is termed maturation. Proteolytic cleavage of p66 RT removes the RNase H domain to yield the p51 RT subunit. In terms of processing, capsid protein p24 is phosphorylated.

It is found in the virion. The protein localises to the host nucleus. It localises to the host cytoplasm. Its subcellular location is the host cell membrane. The enzyme catalyses Specific for a P1 residue that is hydrophobic, and P1' variable, but often Pro.. It catalyses the reaction Endohydrolysis of RNA in RNA/DNA hybrids. Three different cleavage modes: 1. sequence-specific internal cleavage of RNA. Human immunodeficiency virus type 1 and Moloney murine leukemia virus enzymes prefer to cleave the RNA strand one nucleotide away from the RNA-DNA junction. 2. RNA 5'-end directed cleavage 13-19 nucleotides from the RNA end. 3. DNA 3'-end directed cleavage 15-20 nucleotides away from the primer terminus.. It carries out the reaction 3'-end directed exonucleolytic cleavage of viral RNA-DNA hybrid.. The catalysed reaction is DNA(n) + a 2'-deoxyribonucleoside 5'-triphosphate = DNA(n+1) + diphosphate. With respect to regulation, the viral protease is inhibited by many synthetic protease inhibitors (PIs), such as amprenavir, atazanavir, indinavir, loprinavir, nelfinavir, ritonavir and saquinavir. RT can be inhibited either by nucleoside RT inhibitors (NRTIs) or by non nucleoside RT inhibitors (NNRTIs). NRTIs act as chain terminators, whereas NNRTIs inhibit DNA polymerization by binding a small hydrophobic pocket near the RT active site and inducing an allosteric change in this region. Classical NRTIs are abacavir, adefovir (PMEA), didanosine (ddI), lamivudine (3TC), stavudine (d4T), tenofovir (PMPA), zalcitabine (ddC), and zidovudine (AZT). Classical NNRTIs are atevirdine (BHAP U-87201E), delavirdine, efavirenz (DMP-266), emivirine (I-EBU), and nevirapine (BI-RG-587). The tritherapies used as a basic effective treatment of AIDS associate two NRTIs and one NNRTI. Use of protease inhibitors in tritherapy regimens permit more ambitious therapeutic strategies. In terms of biological role, gag-Pol polyprotein and Gag polyprotein may regulate their own translation, by the binding genomic RNA in the 5'-UTR. At low concentration, Gag-Pol and Gag would promote translation, whereas at high concentration, the polyproteins encapsidate genomic RNA and then shut off translation. Matrix protein p17 has two main functions: in infected cell, it targets Gag and Gag-pol polyproteins to the plasma membrane via a multipartite membrane-binding signal, that includes its myristointegration complex. The myristoylation signal and the NLS exert conflicting influences its subcellular localization. The key regulation of these motifs might be phosphorylation of a portion of MA molecules on the C-terminal tyrosine at the time of virus maturation, by virion-associated cellular tyrosine kinase. Implicated in the release from host cell mediated by Vpu. Its function is as follows. Capsid protein p24 forms the conical core that encapsulates the genomic RNA-nucleocapsid complex in the virion. The core is constituted by capsid protein hexamer subunits. The core is disassembled soon after virion entry. Interaction with host PPIA/CYPA protects the virus from restriction by host TRIM5-alpha and from an unknown antiviral activity in host cells. This capsid restriction by TRIM5 is one of the factors which restricts SIV to the simian species. Functionally, nucleocapsid protein p7 encapsulates and protects viral dimeric unspliced (genomic) RNA. Binds these RNAs through its zinc fingers. Facilitates rearangement of nucleic acid secondary structure during retrotranscription of genomic RNA. This capability is referred to as nucleic acid chaperone activity. In terms of biological role, the aspartyl protease mediates proteolytic cleavages of Gag and Gag-Pol polyproteins during or shortly after the release of the virion from the plasma membrane. Cleavages take place as an ordered, step-wise cascade to yield mature proteins. This process is called maturation. Displays maximal activity during the budding process just prior to particle release from the cell. Also cleaves Nef and Vif, probably concomitantly with viral structural proteins on maturation of virus particles. Hydrolyzes host EIF4GI and PABP1 in order to shut off the capped cellular mRNA translation. The resulting inhibition of cellular protein synthesis serves to ensure maximal viral gene expression and to evade host immune response. Reverse transcriptase/ribonuclease H (RT) is a multifunctional enzyme that converts the viral dimeric RNA genome into dsDNA in the cytoplasm, shortly after virus entry into the cell. This enzyme displays a DNA polymerase activity that can copy either DNA or RNA templates, and a ribonuclease H (RNase H) activity that cleaves the RNA strand of RNA-DNA heteroduplexes in a partially processive 3' to 5' endonucleasic mode. Conversion of viral genomic RNA into dsDNA requires many steps. A tRNA binds to the primer-binding site (PBS) situated at the 5'-end of the viral RNA. RT uses the 3' end of the tRNA primer to perform a short round of RNA-dependent minus-strand DNA synthesis. The reading proceeds through the U5 region and ends after the repeated (R) region which is present at both ends of viral RNA. The portion of the RNA-DNA heteroduplex is digested by the RNase H, resulting in a ssDNA product attached to the tRNA primer. This ssDNA/tRNA hybridizes with the identical R region situated at the 3' end of viral RNA. This template exchange, known as minus-strand DNA strong stop transfer, can be either intra- or intermolecular. RT uses the 3' end of this newly synthesized short ssDNA to perform the RNA-dependent minus-strand DNA synthesis of the whole template. RNase H digests the RNA template except for two polypurine tracts (PPTs) situated at the 5'-end and near the center of the genome. It is not clear if both polymerase and RNase H activities are simultaneous. RNase H can probably proceed both in a polymerase-dependent (RNA cut into small fragments by the same RT performing DNA synthesis) and a polymerase-independent mode (cleavage of remaining RNA fragments by free RTs). Secondly, RT performs DNA-directed plus-strand DNA synthesis using the PPTs that have not been removed by RNase H as primers. PPTs and tRNA primers are then removed by RNase H. The 3' and 5' ssDNA PBS regions hybridize to form a circular dsDNA intermediate. Strand displacement synthesis by RT to the PBS and PPT ends produces a blunt ended, linear dsDNA copy of the viral genome that includes long terminal repeats (LTRs) at both ends. Its function is as follows. Integrase catalyzes viral DNA integration into the host chromosome, by performing a series of DNA cutting and joining reactions. This enzyme activity takes place after virion entry into a cell and reverse transcription of the RNA genome in dsDNA. The first step in the integration process is 3' processing. This step requires a complex comprising the viral genome, matrix protein, Vpr and integrase. This complex is called the pre-integration complex (PIC). The integrase protein removes 2 nucleotides from each 3' end of the viral DNA, leaving recessed CA OH's at the 3' ends. In the second step, the PIC enters cell nucleus. This process is mediated through integrase and Vpr proteins, and allows the virus to infect a non dividing cell. This ability to enter the nucleus is specific of lentiviruses, other retroviruses cannot and rely on cell division to access cell chromosomes. In the third step, termed strand transfer, the integrase protein joins the previously processed 3' ends to the 5' ends of strands of target cellular DNA at the site of integration. The 5'-ends are produced by integrase-catalyzed staggered cuts, 5 bp apart. A Y-shaped, gapped, recombination intermediate results, with the 5'-ends of the viral DNA strands and the 3' ends of target DNA strands remaining unjoined, flanking a gap of 5 bp. The last step is viral DNA integration into host chromosome. This involves host DNA repair synthesis in which the 5 bp gaps between the unjoined strands are filled in and then ligated. Since this process occurs at both cuts flanking the SIV genome, a 5 bp duplication of host DNA is produced at the ends of SIV integration. Alternatively, Integrase may catalyze the excision of viral DNA just after strand transfer, this is termed disintegration. The protein is Gag-Pol polyprotein (gag-pol) of Simian immunodeficiency virus agm.grivet (isolate AGM gr-1) (SIV-agm.gri).